Reading from the N-terminus, the 185-residue chain is Ribosome-recycling factor (185 aa).

The protein belongs to the RRF family.

Its subcellular location is the cytoplasm. Functionally, responsible for the release of ribosomes from messenger RNA at the termination of protein biosynthesis. May increase the efficiency of translation by recycling ribosomes from one round of translation to another. The chain is Ribosome-recycling factor from Wolbachia sp. subsp. Drosophila simulans (strain wRi).